The sequence spans 132 residues: Phosphoribosyl-AMP cyclohydrolase (132 aa).

Asp79 lines the Mg(2+) pocket. Cys80 is a Zn(2+) binding site. 2 residues coordinate Mg(2+): Asp81 and Asp83. Residues Cys100 and Cys107 each coordinate Zn(2+).

The protein belongs to the PRA-CH family. Homodimer. Mg(2+) serves as cofactor. It depends on Zn(2+) as a cofactor.

It localises to the cytoplasm. It catalyses the reaction 1-(5-phospho-beta-D-ribosyl)-5'-AMP + H2O = 1-(5-phospho-beta-D-ribosyl)-5-[(5-phospho-beta-D-ribosylamino)methylideneamino]imidazole-4-carboxamide. It functions in the pathway amino-acid biosynthesis; L-histidine biosynthesis; L-histidine from 5-phospho-alpha-D-ribose 1-diphosphate: step 3/9. In terms of biological role, catalyzes the hydrolysis of the adenine ring of phosphoribosyl-AMP. The chain is Phosphoribosyl-AMP cyclohydrolase from Acidovorax sp. (strain JS42).